Consider the following 611-residue polypeptide: Putative clathrin assembly protein At4g02650 (611 aa).

Positions glycine 26–lysine 162 constitute an ENTH domain. 2 disordered regions span residues glycine 158–threonine 184 and threonine 337–leucine 406. Basic and acidic residues predominate over residues methionine 386–glutamine 401.

Its subcellular location is the membrane. The protein localises to the clathrin-coated pit. The protein resides in the golgi apparatus. It is found in the cytoplasmic vesicle. It localises to the clathrin-coated vesicle. The chain is Putative clathrin assembly protein At4g02650 from Arabidopsis thaliana (Mouse-ear cress).